Reading from the N-terminus, the 282-residue chain is Bifunctional protein FolD (282 aa).

Residues 164–166, I189, and I230 each bind NADP(+); that span reads GAS.

The protein belongs to the tetrahydrofolate dehydrogenase/cyclohydrolase family. Homodimer.

It carries out the reaction (6R)-5,10-methylene-5,6,7,8-tetrahydrofolate + NADP(+) = (6R)-5,10-methenyltetrahydrofolate + NADPH. The enzyme catalyses (6R)-5,10-methenyltetrahydrofolate + H2O = (6R)-10-formyltetrahydrofolate + H(+). It functions in the pathway one-carbon metabolism; tetrahydrofolate interconversion. Catalyzes the oxidation of 5,10-methylenetetrahydrofolate to 5,10-methenyltetrahydrofolate and then the hydrolysis of 5,10-methenyltetrahydrofolate to 10-formyltetrahydrofolate. The chain is Bifunctional protein FolD from Campylobacter jejuni subsp. jejuni serotype O:2 (strain ATCC 700819 / NCTC 11168).